Consider the following 74-residue polypeptide: Exodeoxyribonuclease 7 small subunit (74 aa).

The protein belongs to the XseB family. In terms of assembly, heterooligomer composed of large and small subunits.

The protein localises to the cytoplasm. The enzyme catalyses Exonucleolytic cleavage in either 5'- to 3'- or 3'- to 5'-direction to yield nucleoside 5'-phosphates.. In terms of biological role, bidirectionally degrades single-stranded DNA into large acid-insoluble oligonucleotides, which are then degraded further into small acid-soluble oligonucleotides. This chain is Exodeoxyribonuclease 7 small subunit, found in Glaesserella parasuis serovar 5 (strain SH0165) (Haemophilus parasuis).